The sequence spans 465 residues: tRNA-2-methylthio-N(6)-dimethylallyladenosine synthase (465 aa).

In terms of domain architecture, MTTase N-terminal spans R5–R125. Residues C14, C50, C88, C166, C170, and C173 each contribute to the [4Fe-4S] cluster site. One can recognise a Radical SAM core domain in the interval R152–Q382. Residues R387–K449 enclose the TRAM domain.

Belongs to the methylthiotransferase family. MiaB subfamily. As to quaternary structure, monomer. It depends on [4Fe-4S] cluster as a cofactor.

The protein resides in the cytoplasm. The enzyme catalyses N(6)-dimethylallyladenosine(37) in tRNA + (sulfur carrier)-SH + AH2 + 2 S-adenosyl-L-methionine = 2-methylsulfanyl-N(6)-dimethylallyladenosine(37) in tRNA + (sulfur carrier)-H + 5'-deoxyadenosine + L-methionine + A + S-adenosyl-L-homocysteine + 2 H(+). Functionally, catalyzes the methylthiolation of N6-(dimethylallyl)adenosine (i(6)A), leading to the formation of 2-methylthio-N6-(dimethylallyl)adenosine (ms(2)i(6)A) at position 37 in tRNAs that read codons beginning with uridine. This chain is tRNA-2-methylthio-N(6)-dimethylallyladenosine synthase, found in Rhodopseudomonas palustris (strain BisA53).